We begin with the raw amino-acid sequence, 247 residues long: NAD-dependent protein deacetylase (247 aa).

In terms of domain architecture, Deacetylase sirtuin-type spans 1-247 (MDTRKNLKEL…LGGIVEELGY (247 aa)). The NAD(+) site is built by A23, T27, F34, R35, Q104, I106, D107, and H122. Position 34 (F34) interacts with nicotinamide. 2 residues coordinate nicotinamide: I106 and D107. Residue H122 is the Proton acceptor of the active site. 4 residues coordinate Zn(2+): C130, C133, C152, and C155. NAD(+)-binding residues include T193, S194, N216, and I234.

The protein belongs to the sirtuin family. Class U subfamily. It depends on Zn(2+) as a cofactor.

The protein localises to the cytoplasm. The catalysed reaction is N(6)-acetyl-L-lysyl-[protein] + NAD(+) + H2O = 2''-O-acetyl-ADP-D-ribose + nicotinamide + L-lysyl-[protein]. Its function is as follows. NAD-dependent protein deacetylase which modulates the activities of several enzymes which are inactive in their acetylated form. This Clostridium tetani (strain Massachusetts / E88) protein is NAD-dependent protein deacetylase.